The chain runs to 237 residues: Ubiquinone/menaquinone biosynthesis C-methyltransferase UbiE (237 aa).

S-adenosyl-L-methionine contacts are provided by T60 and D80.

Belongs to the class I-like SAM-binding methyltransferase superfamily. MenG/UbiE family.

The enzyme catalyses a 2-demethylmenaquinol + S-adenosyl-L-methionine = a menaquinol + S-adenosyl-L-homocysteine + H(+). It carries out the reaction a 2-methoxy-6-(all-trans-polyprenyl)benzene-1,4-diol + S-adenosyl-L-methionine = a 5-methoxy-2-methyl-3-(all-trans-polyprenyl)benzene-1,4-diol + S-adenosyl-L-homocysteine + H(+). It functions in the pathway quinol/quinone metabolism; menaquinone biosynthesis; menaquinol from 1,4-dihydroxy-2-naphthoate: step 2/2. Its pathway is cofactor biosynthesis; ubiquinone biosynthesis. In terms of biological role, methyltransferase required for the conversion of demethylmenaquinol (DMKH2) to menaquinol (MKH2) and the conversion of 2-polyprenyl-6-methoxy-1,4-benzoquinol (DDMQH2) to 2-polyprenyl-3-methyl-6-methoxy-1,4-benzoquinol (DMQH2). The chain is Ubiquinone/menaquinone biosynthesis C-methyltransferase UbiE from Syntrophotalea carbinolica (strain DSM 2380 / NBRC 103641 / GraBd1) (Pelobacter carbinolicus).